Here is a 378-residue protein sequence, read N- to C-terminus: MSHLDNGFRSLTLQRFPATDDVNPLQAWEAADEYLLQQLDDTEILGPVLILNDAFGALSCALAEHKPYSIGDSYISELATRENLRLNGIDESSVKFLDSTADYPQQPGVVLIKVPKTLALLEQQLRALRKVVTSDTRIIAGAKARDIHTSTLELFEKVLGPTTTTLAWKKARLINCTFNEPPLADAPQTVSWKLEGTDWTIHNHANVFSRTGLDIGARFFMQHLPENLEGEIVDLGCGNGVIGLTLLDKNPQAKVVFVDESPMAVASSRLNVETNMPEALDRSEFMINNALSGVEPFRFNAVLCNPPFHQQHALTDNVAWEMFHYARRCLKINGELYIVANRHLDYFHKLKKIFGNCTTIATNNKFVVLKAVKLGRRR.

Belongs to the methyltransferase superfamily. RlmG family.

The protein localises to the cytoplasm. It catalyses the reaction guanosine(1835) in 23S rRNA + S-adenosyl-L-methionine = N(2)-methylguanosine(1835) in 23S rRNA + S-adenosyl-L-homocysteine + H(+). In terms of biological role, specifically methylates the guanine in position 1835 (m2G1835) of 23S rRNA. This Shigella flexneri protein is Ribosomal RNA large subunit methyltransferase G.